We begin with the raw amino-acid sequence, 502 residues long: Glycerol kinase (502 aa).

Thr13 is an ADP binding site. ATP contacts are provided by Thr13, Thr14, and Ser15. Thr13 contacts sn-glycerol 3-phosphate. Arg17 provides a ligand contact to ADP. Positions 83, 84, 136, and 246 each coordinate sn-glycerol 3-phosphate. Arg83, Glu84, Tyr136, Asp246, and Gln247 together coordinate glycerol. ADP-binding residues include Thr268 and Gly311. Residues Thr268, Gly311, Gln315, and Gly412 each coordinate ATP. The ADP site is built by Gly412 and Asn416.

This sequence belongs to the FGGY kinase family.

The enzyme catalyses glycerol + ATP = sn-glycerol 3-phosphate + ADP + H(+). It functions in the pathway polyol metabolism; glycerol degradation via glycerol kinase pathway; sn-glycerol 3-phosphate from glycerol: step 1/1. Its activity is regulated as follows. Inhibited by fructose 1,6-bisphosphate (FBP). In terms of biological role, key enzyme in the regulation of glycerol uptake and metabolism. Catalyzes the phosphorylation of glycerol to yield sn-glycerol 3-phosphate. The protein is Glycerol kinase of Francisella tularensis subsp. holarctica (strain FTNF002-00 / FTA).